The following is a 316-amino-acid chain: MAGCGEVSHSANMLPTNKKLVEPCPNSAPSLSVPECAICLQTCVHPVSLPCKHIFCYLCVKGASWLGRRCALCRQEIPEDFLDKPTLLSPEELKSASRGNGEYAWYYEGRNGWWQYDERTSRELEDAFTKGKKSTEMLIAGFLYVADLENMVQYRRNEHGRRRKIKRDIVDIPKKGVAGLRLECDAANVNLARESSADGADNMAALGASSSQPTPVLPTRLHTSLSTTASHALSHSDVTSSLENSFAQLQIGDPVIGRNNIGEGEEGQPLINARMPAPSALLEESEPSDSNDHGSPTLQHNSLLVPQSNRLPFGNP.

The RING-type zinc-finger motif lies at 36–74 (CAICLQTCVHPVSLPCKHIFCYLCVKGASWLGRRCALCR). Positions 91–167 (EELKSASRGN…EHGRRRKIKR (77 aa)) constitute a WWE domain. Tyr107, Arg110, Trp114, Tyr144, Gln153, Arg163, and Lys175 together coordinate a glycoprotein. The disordered stretch occupies residues 257-316 (GRNNIGEGEEGQPLINARMPAPSALLEESEPSDSNDHGSPTLQHNSLLVPQSNRLPFGNP). The span at 293-310 (HGSPTLQHNSLLVPQSNR) shows a compositional bias: polar residues.

The protein localises to the cytoplasm. It localises to the cytosol. The protein resides in the nucleus. It catalyses the reaction S-ubiquitinyl-[E2 ubiquitin-conjugating enzyme]-L-cysteine + [acceptor protein]-L-lysine = [E2 ubiquitin-conjugating enzyme]-L-cysteine + N(6)-ubiquitinyl-[acceptor protein]-L-lysine.. The protein operates within protein modification; protein ubiquitination. In terms of biological role, E3 ubiquitin-protein ligase that specifically binds poly-ADP-ribosylated proteins and mediates their ubiquitination and subsequent degradation. May regulate many important biological processes, such as cell survival and DNA damage response. Acts as an activator of the Wnt signaling pathway by mediating the ubiquitination of poly-ADP-ribosylated proteins. Neuroprotective protein. Protects against cell death induced by DNA damaging agents and rescues cells from G1 arrest. Promotes cell survival after gamma-irradiation. Facilitates DNA repair. This is E3 ubiquitin-protein ligase rnf146 (rnf146) from Xenopus tropicalis (Western clawed frog).